The primary structure comprises 257 residues: Sad1-interacting factor 1 (257 aa).

The interval 16–68 is disordered; it reads LNKIKQGGASRINQILGQNSDDSQSDVRATASEEAVHSETATPVTPMSSGFME. Polar residues-rich tracts occupy residues 26–37 and 54–63; these read RINQILGQNSDD and ETATPVTPMS. Position 35 is a phosphoserine (Ser-35). Ser-132 carries the phosphoserine modification. A Phosphothreonine modification is found at Thr-134. The next 2 membrane-spanning stretches (helical) occupy residues 160-180 and 231-251; these read LLAISIVVIVCYFKHLPLLPW and FTQLITDACMTIFALGLCCYF.

In terms of assembly, interacts with kms1 and sad1.

It localises to the membrane. This Schizosaccharomyces pombe (strain 972 / ATCC 24843) (Fission yeast) protein is Sad1-interacting factor 1 (sif1).